We begin with the raw amino-acid sequence, 203 residues long: Large ribosomal subunit protein bL25 (203 aa).

It belongs to the bacterial ribosomal protein bL25 family. CTC subfamily. As to quaternary structure, part of the 50S ribosomal subunit; part of the 5S rRNA/L5/L18/L25 subcomplex. Contacts the 5S rRNA. Binds to the 5S rRNA independently of L5 and L18.

Its function is as follows. This is one of the proteins that binds to the 5S RNA in the ribosome where it forms part of the central protuberance. The polypeptide is Large ribosomal subunit protein bL25 (Cellvibrio japonicus (strain Ueda107) (Pseudomonas fluorescens subsp. cellulosa)).